The primary structure comprises 101 residues: NADH-quinone oxidoreductase subunit K (101 aa).

3 consecutive transmembrane segments (helical) span residues 4 to 24 (LAHFLVLGAILFAISIVGIFL), 30 to 50 (IVLLMAIELMLLAVNINFVAF), and 61 to 81 (VFVFFILTVAAAESAIGLAIL).

This sequence belongs to the complex I subunit 4L family. In terms of assembly, NDH-1 is composed of 14 different subunits. Subunits NuoA, H, J, K, L, M, N constitute the membrane sector of the complex.

The protein localises to the cell inner membrane. It carries out the reaction a quinone + NADH + 5 H(+)(in) = a quinol + NAD(+) + 4 H(+)(out). Functionally, NDH-1 shuttles electrons from NADH, via FMN and iron-sulfur (Fe-S) centers, to quinones in the respiratory chain. The immediate electron acceptor for the enzyme in this species is believed to be ubiquinone. Couples the redox reaction to proton translocation (for every two electrons transferred, four hydrogen ions are translocated across the cytoplasmic membrane), and thus conserves the redox energy in a proton gradient. The protein is NADH-quinone oxidoreductase subunit K of Cupriavidus taiwanensis (strain DSM 17343 / BCRC 17206 / CCUG 44338 / CIP 107171 / LMG 19424 / R1) (Ralstonia taiwanensis (strain LMG 19424)).